The chain runs to 183 residues: Ribulose bisphosphate carboxylase small subunit, chloroplastic 1 (183 aa).

Residues 1-58 (MASSMLSNAAMATTAATAGAQASMVAPFNGLKSFATFPITKKSSNDFSSLPSNGGRVQ) constitute a chloroplast transit peptide.

The protein belongs to the RuBisCO small chain family. In terms of assembly, heterohexadecamer of 8 large and 8 small subunits.

Its subcellular location is the plastid. The protein localises to the chloroplast. Its function is as follows. RuBisCO catalyzes two reactions: the carboxylation of D-ribulose 1,5-bisphosphate, the primary event in carbon dioxide fixation, as well as the oxidative fragmentation of the pentose substrate. Both reactions occur simultaneously and in competition at the same active site. Although the small subunit is not catalytic it is essential for maximal activity. The protein is Ribulose bisphosphate carboxylase small subunit, chloroplastic 1 of Amaranthus hypochondriacus (Prince-of-Wales feather).